Reading from the N-terminus, the 148-residue chain is MNFSFAPLFLVTLILLGVVSNNNSITISATILLLMQQTALIQFVPLVEKHGLNLGIILLTIGVLSPLVSGKAQVPPVAEFLNFKMISAVFIGIFVAWLAGRGVPLMGQQPVLITGLLIGTVIGVAFMGGIPVGPLIAAGILSFVVGKG.

A run of 4 helical transmembrane segments spans residues 13–35 (LILL…LLLM), 50–70 (HGLN…LVSG), 80–100 (FLNF…WLAG), and 121–141 (VIGV…AGIL).

It belongs to the UPF0756 family.

Its subcellular location is the cell membrane. The protein is UPF0756 membrane protein NMA2160 of Neisseria meningitidis serogroup A / serotype 4A (strain DSM 15465 / Z2491).